The following is a 474-amino-acid chain: 3-isopropylmalate dehydratase large subunit (474 aa).

[4Fe-4S] cluster contacts are provided by C350, C411, and C414.

Belongs to the aconitase/IPM isomerase family. LeuC type 1 subfamily. Heterodimer of LeuC and LeuD. [4Fe-4S] cluster serves as cofactor.

The catalysed reaction is (2R,3S)-3-isopropylmalate = (2S)-2-isopropylmalate. The protein operates within amino-acid biosynthesis; L-leucine biosynthesis; L-leucine from 3-methyl-2-oxobutanoate: step 2/4. Catalyzes the isomerization between 2-isopropylmalate and 3-isopropylmalate, via the formation of 2-isopropylmaleate. The chain is 3-isopropylmalate dehydratase large subunit from Hydrogenovibrio crunogenus (strain DSM 25203 / XCL-2) (Thiomicrospira crunogena).